Reading from the N-terminus, the 169-residue chain is Lipoprotein signal peptidase (169 aa).

Helical transmembrane passes span 4 to 24, 29 to 49, 70 to 90, and 101 to 121; these read PICS…ILDI, WVMA…FNLT, WFFA…MYRS, and YALI…HGAV. Catalysis depends on residues aspartate 123 and aspartate 141. A helical transmembrane segment spans residues 137 to 157; that stretch reads FNLADVAICIGAALVIFEGFL.

This sequence belongs to the peptidase A8 family.

It is found in the cell inner membrane. The enzyme catalyses Release of signal peptides from bacterial membrane prolipoproteins. Hydrolyzes -Xaa-Yaa-Zaa-|-(S,diacylglyceryl)Cys-, in which Xaa is hydrophobic (preferably Leu), and Yaa (Ala or Ser) and Zaa (Gly or Ala) have small, neutral side chains.. Its pathway is protein modification; lipoprotein biosynthesis (signal peptide cleavage). Functionally, this protein specifically catalyzes the removal of signal peptides from prolipoproteins. The protein is Lipoprotein signal peptidase of Yersinia pestis bv. Antiqua (strain Antiqua).